The sequence spans 382 residues: Mannitol-1-phosphate 5-dehydrogenase (382 aa).

3–14 is an NAD(+) binding site; the sequence is ALHFGAGNIGRG.

This sequence belongs to the mannitol dehydrogenase family.

It carries out the reaction D-mannitol 1-phosphate + NAD(+) = beta-D-fructose 6-phosphate + NADH + H(+). This is Mannitol-1-phosphate 5-dehydrogenase from Salmonella schwarzengrund (strain CVM19633).